Consider the following 167-residue polypeptide: Ribosome maturation factor RimM (167 aa).

One can recognise a PRC barrel domain in the interval 94–165; the sequence is ENEFYYSDII…KIIITPMEGL (72 aa).

Belongs to the RimM family. Binds ribosomal protein uS19.

It localises to the cytoplasm. In terms of biological role, an accessory protein needed during the final step in the assembly of 30S ribosomal subunit, possibly for assembly of the head region. Essential for efficient processing of 16S rRNA. May be needed both before and after RbfA during the maturation of 16S rRNA. It has affinity for free ribosomal 30S subunits but not for 70S ribosomes. The protein is Ribosome maturation factor RimM of Staphylococcus aureus (strain NCTC 8325 / PS 47).